Consider the following 224-residue polypeptide: Orotate phosphoribosyltransferase (224 aa).

A 5-phospho-alpha-D-ribose 1-diphosphate-binding site is contributed by K29. 37 to 38 (FF) contacts orotate. 5-phospho-alpha-D-ribose 1-diphosphate is bound by residues 75-76 (YK), R105, K106, K109, H111, and 130-138 (DDVITAGTS). Orotate-binding residues include T134 and R162.

The protein belongs to the purine/pyrimidine phosphoribosyltransferase family. PyrE subfamily. In terms of assembly, homodimer. Mg(2+) serves as cofactor.

It catalyses the reaction orotidine 5'-phosphate + diphosphate = orotate + 5-phospho-alpha-D-ribose 1-diphosphate. Its pathway is pyrimidine metabolism; UMP biosynthesis via de novo pathway; UMP from orotate: step 1/2. Catalyzes the transfer of a ribosyl phosphate group from 5-phosphoribose 1-diphosphate to orotate, leading to the formation of orotidine monophosphate (OMP). The sequence is that of Orotate phosphoribosyltransferase from Bordetella pertussis (strain Tohama I / ATCC BAA-589 / NCTC 13251).